Reading from the N-terminus, the 253-residue chain is tRNA pseudouridine synthase A (253 aa).

The active-site Nucleophile is aspartate 53. Position 112 (tyrosine 112) interacts with substrate.

This sequence belongs to the tRNA pseudouridine synthase TruA family. In terms of assembly, homodimer.

It catalyses the reaction uridine(38/39/40) in tRNA = pseudouridine(38/39/40) in tRNA. Its function is as follows. Formation of pseudouridine at positions 38, 39 and 40 in the anticodon stem and loop of transfer RNAs. In Lactococcus lactis subsp. cremoris (strain MG1363), this protein is tRNA pseudouridine synthase A.